Reading from the N-terminus, the 328-residue chain is uncharacterized protein (328 aa).

One can recognise an SIS domain in the interval 37 to 179; that stretch reads LTERLLCHQG…AMTVLRCRKI (143 aa). 52–57 serves as a coordination point for ATP; sequence GIGKSG. CBS domains follow at residues 205-264 and 273-328; these read LSPR…GGAI and MTRK…AGLL.

It belongs to the SIS family. GutQ/KpsF subfamily.

This is an uncharacterized protein from Chlamydia muridarum (strain MoPn / Nigg).